The chain runs to 447 residues: Methylenetetrahydrofolate--tRNA-(uracil-5-)-methyltransferase TrmFO (447 aa).

An FAD-binding site is contributed by 13 to 18 (GAGLAG).

Belongs to the MnmG family. TrmFO subfamily. Requires FAD as cofactor.

Its subcellular location is the cytoplasm. The enzyme catalyses uridine(54) in tRNA + (6R)-5,10-methylene-5,6,7,8-tetrahydrofolate + NADH + H(+) = 5-methyluridine(54) in tRNA + (6S)-5,6,7,8-tetrahydrofolate + NAD(+). It carries out the reaction uridine(54) in tRNA + (6R)-5,10-methylene-5,6,7,8-tetrahydrofolate + NADPH + H(+) = 5-methyluridine(54) in tRNA + (6S)-5,6,7,8-tetrahydrofolate + NADP(+). In terms of biological role, catalyzes the folate-dependent formation of 5-methyl-uridine at position 54 (M-5-U54) in all tRNAs. The sequence is that of Methylenetetrahydrofolate--tRNA-(uracil-5-)-methyltransferase TrmFO from Streptococcus thermophilus (strain CNRZ 1066).